Consider the following 497-residue polypeptide: Bifunctional protein GlmU (497 aa).

A pyrophosphorylase region spans residues 1 to 252 (MSQPSARPSA…VWEVEGANDR (252 aa)). UDP-N-acetyl-alpha-D-glucosamine-binding positions include 14-17 (LAAG), Lys28, Gln86, 91-92 (GT), 115-117 (YGD), Gly154, Glu169, Asn192, and Asn250. Asp117 contributes to the Mg(2+) binding site. Mg(2+) is bound at residue Asn250. Residues 253 to 273 (RQLSDLGRRLNERVLRHWMKE) form a linker region. The interval 274–497 (GVTVVDPSST…AGAEGSGAQG (224 aa)) is N-acetyltransferase. Arg355 and Lys373 together coordinate UDP-N-acetyl-alpha-D-glucosamine. The active-site Proton acceptor is His385. Residues Tyr388 and Asn399 each coordinate UDP-N-acetyl-alpha-D-glucosamine. Acetyl-CoA-binding positions include 408–409 (NY), Ser427, and Ala445. A disordered region spans residues 473–497 (PAKRPGTSSAEAARAAGAEGSGAQG). The span at 480–490 (SSAEAARAAGA) shows a compositional bias: low complexity.

This sequence in the N-terminal section; belongs to the N-acetylglucosamine-1-phosphate uridyltransferase family. The protein in the C-terminal section; belongs to the transferase hexapeptide repeat family. Homotrimer. Mg(2+) serves as cofactor.

The protein localises to the cytoplasm. The enzyme catalyses alpha-D-glucosamine 1-phosphate + acetyl-CoA = N-acetyl-alpha-D-glucosamine 1-phosphate + CoA + H(+). It carries out the reaction N-acetyl-alpha-D-glucosamine 1-phosphate + UTP + H(+) = UDP-N-acetyl-alpha-D-glucosamine + diphosphate. It functions in the pathway nucleotide-sugar biosynthesis; UDP-N-acetyl-alpha-D-glucosamine biosynthesis; N-acetyl-alpha-D-glucosamine 1-phosphate from alpha-D-glucosamine 6-phosphate (route II): step 2/2. Its pathway is nucleotide-sugar biosynthesis; UDP-N-acetyl-alpha-D-glucosamine biosynthesis; UDP-N-acetyl-alpha-D-glucosamine from N-acetyl-alpha-D-glucosamine 1-phosphate: step 1/1. It participates in bacterial outer membrane biogenesis; LPS lipid A biosynthesis. Its function is as follows. Catalyzes the last two sequential reactions in the de novo biosynthetic pathway for UDP-N-acetylglucosamine (UDP-GlcNAc). The C-terminal domain catalyzes the transfer of acetyl group from acetyl coenzyme A to glucosamine-1-phosphate (GlcN-1-P) to produce N-acetylglucosamine-1-phosphate (GlcNAc-1-P), which is converted into UDP-GlcNAc by the transfer of uridine 5-monophosphate (from uridine 5-triphosphate), a reaction catalyzed by the N-terminal domain. The protein is Bifunctional protein GlmU of Micrococcus luteus (strain ATCC 4698 / DSM 20030 / JCM 1464 / CCM 169 / CCUG 5858 / IAM 1056 / NBRC 3333 / NCIMB 9278 / NCTC 2665 / VKM Ac-2230) (Micrococcus lysodeikticus).